A 179-amino-acid chain; its full sequence is Large ribosomal subunit protein uL5 (179 aa).

It belongs to the universal ribosomal protein uL5 family. Part of the 50S ribosomal subunit; part of the 5S rRNA/L5/L18/L25 subcomplex. Contacts the 5S rRNA and the P site tRNA. Forms a bridge to the 30S subunit in the 70S ribosome.

This is one of the proteins that bind and probably mediate the attachment of the 5S RNA into the large ribosomal subunit, where it forms part of the central protuberance. In the 70S ribosome it contacts protein S13 of the 30S subunit (bridge B1b), connecting the 2 subunits; this bridge is implicated in subunit movement. Contacts the P site tRNA; the 5S rRNA and some of its associated proteins might help stabilize positioning of ribosome-bound tRNAs. This chain is Large ribosomal subunit protein uL5, found in Nitrosomonas eutropha (strain DSM 101675 / C91 / Nm57).